The primary structure comprises 1141 residues: Serine-aspartate repeat-containing protein E (1141 aa).

A signal peptide spans 1–52 (MINRDNKKAITKKGMISNRLNKFSIRKYTVGTASILVGTTLIFGLGNQEAKA). The YSIRK-G/S signaling motif motif lies at 23-34 (FSIRKYTVGTAS). A ligand binding A region region spans residues 53 to 601 (AENTSTENAK…GDGTVKPEEK (549 aa)). Positions 54 to 248 (ENTSTENAKQ…RSTKPVATAP (195 aa)) are disordered. The segment covering 61-75 (AKQDDATTSDNKEVV) has biased composition (basic and acidic residues). The span at 77–90 (ETENNSTTENDSTN) shows a compositional bias: low complexity. The segment covering 92 to 108 (IKKETNTDSQPEAKEES) has biased composition (basic and acidic residues). Residues 109–126 (TTSSTQQQQNNVTATTET) show a composition bias toward low complexity. Basic and acidic residues predominate over residues 130-145 (NIEKENVKPSTDKTAT). Residues 159-207 (NYTNNDVTTKPSTSEIQTKPTTPQESTNIENSQPQPTPSKVDNQVTDAT) show a composition bias toward polar residues. The span at 216–241 (SKEELKNNPEKLKELVRNDNNTDRST) shows a compositional bias: basic and acidic residues. CNA-B domains lie at 602–714 (LYKI…YKEP), 715–824 (KYNL…YKTP), and 825–935 (KYSL…EEDT). The interval 899–1117 (VTNTTEDDKD…GSENNGSNNA (219 aa)) is disordered. 2 stretches are compositionally biased toward acidic residues: residues 903–913 (TEDDKDADGGE) and 930–1080 (YFEE…DSDS). The LPXTG sorting signal signature appears at 1104–1108 (LPETG). Thr1107 carries the pentaglycyl murein peptidoglycan amidated threonine modification. A propeptide spans 1108–1141 (GSENNGSNNATLFGGLFAALGSLLLFGRRKKQNK) (removed by sortase).

This sequence belongs to the serine-aspartate repeat-containing protein (SDr) family. In terms of assembly, interacts with host complement factor H/CFAH (via C-terminus). Interacts with host complement regulator C4BPA.

The protein localises to the secreted. The protein resides in the cell wall. Functionally, cell surface-associated calcium-binding protein which plays an important role in adhesion and pathogenesis. Contributes to the resistance to killing by innate immune components in blood and thus attenuates bacterial clearance by interacting with host complement factor H/CFAH and modulating its activity. Also inhibits bacterial opsonization and killing by interacting with host complement regulator C4BPA and thus inhibiting classical complement pathway activation. In Staphylococcus aureus (strain N315), this protein is Serine-aspartate repeat-containing protein E (sdrE).